Here is a 487-residue protein sequence, read N- to C-terminus: Chromosomal replication initiator protein DnaA (487 aa).

Positions Met-1–Thr-79 are domain I, interacts with DnaA modulators. Residues Thr-79–Pro-142 form a domain II region. A domain III, AAA+ region region spans residues Phe-143–Ile-359. ATP contacts are provided by Gly-187, Gly-189, Lys-190, and Thr-191. Residues Asp-360–Asn-487 are domain IV, binds dsDNA.

It belongs to the DnaA family. Oligomerizes as a right-handed, spiral filament on DNA at oriC.

The protein localises to the cytoplasm. Functionally, plays an essential role in the initiation and regulation of chromosomal replication. ATP-DnaA binds to the origin of replication (oriC) to initiate formation of the DNA replication initiation complex once per cell cycle. Binds the DnaA box (a 9 base pair repeat at the origin) and separates the double-stranded (ds)DNA. Forms a right-handed helical filament on oriC DNA; dsDNA binds to the exterior of the filament while single-stranded (ss)DNA is stabiized in the filament's interior. The ATP-DnaA-oriC complex binds and stabilizes one strand of the AT-rich DNA unwinding element (DUE), permitting loading of DNA polymerase. After initiation quickly degrades to an ADP-DnaA complex that is not apt for DNA replication. Binds acidic phospholipids. This is Chromosomal replication initiator protein DnaA from Borreliella burgdorferi (strain ZS7) (Borrelia burgdorferi).